The primary structure comprises 300 residues: ADP-polyphosphate phosphotransferase 1 (300 aa).

This sequence belongs to the polyphosphate kinase 2 (PPK2) family. Class I subfamily. In terms of assembly, homotetramer. The cofactor is Mg(2+).

The enzyme catalyses [phosphate](n) + ATP = [phosphate](n+1) + ADP. It catalyses the reaction [phosphate](n) + GTP = [phosphate](n+1) + GDP. Functionally, uses inorganic polyphosphate (polyP) as a donor to convert ADP to ATP. Can also convert GDP to GTP, with lower efficiency. Cannot dephosphorylate ATP in the presence of polyP. This chain is ADP-polyphosphate phosphotransferase 1, found in Rhizobium meliloti (strain 1021) (Ensifer meliloti).